A 700-amino-acid polypeptide reads, in one-letter code: Elongation factor G (700 aa).

One can recognise a tr-type G domain in the interval 10–286; that stretch reads TKVRNIGIMA…AVIDYLPSPL (277 aa). GTP contacts are provided by residues 19-26, 83-87, and 137-140; these read AHIDAGKT, DTPGH, and NKMD.

It belongs to the TRAFAC class translation factor GTPase superfamily. Classic translation factor GTPase family. EF-G/EF-2 subfamily.

It localises to the cytoplasm. Its function is as follows. Catalyzes the GTP-dependent ribosomal translocation step during translation elongation. During this step, the ribosome changes from the pre-translocational (PRE) to the post-translocational (POST) state as the newly formed A-site-bound peptidyl-tRNA and P-site-bound deacylated tRNA move to the P and E sites, respectively. Catalyzes the coordinated movement of the two tRNA molecules, the mRNA and conformational changes in the ribosome. The polypeptide is Elongation factor G (Kineococcus radiotolerans (strain ATCC BAA-149 / DSM 14245 / SRS30216)).